The following is a 131-amino-acid chain: Snaclec A13 (131 aa).

3 cysteine pairs are disulfide-bonded: Cys-4–Cys-15, Cys-32–Cys-125, and Cys-100–Cys-117. Positions 11–126 (YEGHCYKVFN…CELAYHFICM (116 aa)) constitute a C-type lectin domain.

The protein belongs to the snaclec family. As to quaternary structure, heterodimer; disulfide-linked. As to expression, expressed by the venom gland.

It is found in the secreted. Functionally, interferes with one step of hemostasis (modulation of platelet aggregation, or coagulation cascade, for example). The chain is Snaclec A13 from Macrovipera lebetinus (Levantine viper).